The sequence spans 793 residues: Kinesin-associated protein 3 (793 aa).

Position 60 is a phosphoserine (S60). Basic and acidic residues predominate over residues 103–119 (LPGKEKKEKSSKPKDPP). Positions 103–123 (LPGKEKKEKSSKPKDPPPFEG) are disordered. ARM repeat units lie at residues 333–373 (FMEN…NLSF), 374–412 (DTGLRNKMVQVGLLPKLTALLGNENYKQIAMCVLYHISM), 494–533 (DGPTKNLFIDYVGDLAAQISSDEEEEFVIECLGTLANLTI), 578–620 (DDSC…QMVF), and 621–662 (HQAT…IIAE).

In terms of assembly, interacts with SMC3 subunit of the cohesin complex. Heterotrimer of KIFAP3, KIF3A and KIF3B. Interacts with RAP1GDS1/SMG GDS. In terms of processing, phosphorylated on tyrosine residues by SRC in vitro; this reduces the binding affinity of the protein for RAP1GDS1.

In terms of biological role, involved in tethering the chromosomes to the spindle pole and in chromosome movement. Binds to the tail domain of the KIF3A/KIF3B heterodimer to form a heterotrimeric KIF3 complex and may regulate the membrane binding of this complex. The chain is Kinesin-associated protein 3 (Kifap3) from Mus musculus (Mouse).